A 266-amino-acid chain; its full sequence is 3-methyl-2-oxobutanoate hydroxymethyltransferase (266 aa).

Positions 45 and 84 each coordinate Mg(2+). 3-methyl-2-oxobutanoate-binding positions include 45 to 46 (DS), Asp84, and Lys112. Glu114 lines the Mg(2+) pocket. Glu181 acts as the Proton acceptor in catalysis.

It belongs to the PanB family. Homodecamer; pentamer of dimers. Mg(2+) is required as a cofactor.

It localises to the cytoplasm. It carries out the reaction 3-methyl-2-oxobutanoate + (6R)-5,10-methylene-5,6,7,8-tetrahydrofolate + H2O = 2-dehydropantoate + (6S)-5,6,7,8-tetrahydrofolate. The protein operates within cofactor biosynthesis; (R)-pantothenate biosynthesis; (R)-pantoate from 3-methyl-2-oxobutanoate: step 1/2. In terms of biological role, catalyzes the reversible reaction in which hydroxymethyl group from 5,10-methylenetetrahydrofolate is transferred onto alpha-ketoisovalerate to form ketopantoate. This Stutzerimonas stutzeri (strain A1501) (Pseudomonas stutzeri) protein is 3-methyl-2-oxobutanoate hydroxymethyltransferase.